The primary structure comprises 153 residues: Histone H2B.3 (153 aa).

Basic and acidic residues-rich tracts occupy residues 1 to 28 and 36 to 53; these read MAPK…EKAL and EKRL…EGRK. Residues 1–61 are disordered; the sequence is MAPKAEKKPA…RKAGRKKAKK (61 aa). 2 positions are modified to N6-acetyllysine: K7 and K37. Residue K149 forms a Glycyl lysine isopeptide (Lys-Gly) (interchain with G-Cter in ubiquitin) linkage.

The protein belongs to the histone H2B family. In terms of assembly, the nucleosome is a histone octamer containing two molecules each of H2A, H2B, H3 and H4 assembled in one H3-H4 heterotetramer and two H2A-H2B heterodimers. The octamer wraps approximately 147 bp of DNA. Post-translationally, can be acetylated to form H2BK6ac and H2BK33ac. In terms of processing, monoubiquitinated by BRE1 to form H2BK143ub1 and deubiquitinated by UBP26. Required for heterochromatic histone H3 di- and trimethylation at H3K4me. May give a specific tag for epigenetic transcriptional activation.

The protein localises to the nucleus. It is found in the chromosome. Functionally, core component of nucleosome. Nucleosomes wrap and compact DNA into chromatin, limiting DNA accessibility to the cellular machineries which require DNA as a template. Histones thereby play a central role in transcription regulation, DNA repair, DNA replication and chromosomal stability. DNA accessibility is regulated via a complex set of post-translational modifications of histones, also called histone code, and nucleosome remodeling. The protein is Histone H2B.3 (H2B.3) of Oryza sativa subsp. indica (Rice).